We begin with the raw amino-acid sequence, 502 residues long: Hippocampus abundant transcript-like protein 1 (502 aa).

A compositionally biased stretch (basic and acidic residues) spans 1-12 (MNAEPPEEKAAS). The segment at 1 to 27 (MNAEPPEEKAASEAEAGAMPEKRAGSR) is disordered. Residues 1-46 (MNAEPPEEKAASEAEAGAMPEKRAGSRAAGGNSLQGFGRPSVYHAA) are Extracellular-facing. A helical membrane pass occupies residues 47–67 (IVIFLEFFAWGLLTTSMLTVL). The Cytoplasmic segment spans residues 68–79 (HETFPQHTFLMN). Residues 80–100 (GLIQGVKGLLSFLSAPLIGAL) form a helical membrane-spanning segment. Residues 101–108 (SDVWGRKP) are Extracellular-facing. A helical membrane pass occupies residues 109–129 (FLLGTVFFTCFPIPLMRISPW). Residues 130–131 (WY) are Cytoplasmic-facing. The chain crosses the membrane as a helical span at residues 132–152 (FAMISISGVFSVTFSVIFAYV). The Extracellular segment spans residues 153–165 (ADVTQEHERSTAY). Residues 166 to 186 (GWVSATFAASLVSSPAIGAYL) form a helical membrane-spanning segment. Topologically, residues 187–193 (SASYGDS) are cytoplasmic. A helical transmembrane segment spans residues 194–214 (LVVLVATVVALLDICFILLAV). At 215 to 248 (PESLPEKMRPLSWGARISWKQADPFASLKKVGKD) the chain is on the extracellular side. Residues 249–269 (STILLICITVFLSYLPEAGQY) form a helical membrane-spanning segment. Residues 270 to 278 (SSFFLYLRQ) lie on the Cytoplasmic side of the membrane. A helical membrane pass occupies residues 279 to 299 (VIGFGSIKIAAFIAMVGILSI). Over 300-316 (VAQTVFLTSLMRSLGNK) the chain is Extracellular. The chain crosses the membrane as a helical span at residues 317–337 (NTVLLGLGFQMFQLAWYGFGS). A topological domain (cytoplasmic) is located at residue Gln338. Residues 339-359 (AWMMWAAGIVAAVSSITFPAV) traverse the membrane as a helical segment. Residues 360-384 (STLVSQNADSNQQGVAQGIITGIRG) are Extracellular-facing. Residues 385–405 (LCNGLGPALYGFIFYMFHVEL) form a helical membrane-spanning segment. Residues 406–425 (TELEPELISNNAALQGAVIP) are Cytoplasmic-facing. The chain crosses the membrane as a helical span at residues 426–446 (GPPFLFGACIVFMSFLVAVFI). Topologically, residues 447–502 (PEYSKGGIQKHSNSISGSLANTPERGSDEDIEPLLQDSSIWELSSLEEPGHQCTEL) are extracellular.

The protein belongs to the major facilitator superfamily.

It localises to the membrane. The sequence is that of Hippocampus abundant transcript-like protein 1 from Bos taurus (Bovine).